The sequence spans 208 residues: Guanylate kinase (208 aa).

A Guanylate kinase-like domain is found at 21–201; that stretch reads GRVVVLSGPS…ACAELVSLLV (181 aa). 28 to 35 lines the ATP pocket; sequence GPSAVGKS.

Belongs to the guanylate kinase family.

It is found in the cytoplasm. The enzyme catalyses GMP + ATP = GDP + ADP. Functionally, essential for recycling GMP and indirectly, cGMP. The polypeptide is Guanylate kinase (gmk) (Mycobacterium bovis (strain ATCC BAA-935 / AF2122/97)).